The following is a 342-amino-acid chain: UDP-N-acetylglucosamine--N-acetylmuramyl-(pentapeptide) pyrophosphoryl-undecaprenol N-acetylglucosamine transferase (342 aa).

Residues 10–12 (TGG), Asn124, Ser177, and Gln275 contribute to the UDP-N-acetyl-alpha-D-glucosamine site.

This sequence belongs to the glycosyltransferase 28 family. MurG subfamily.

The protein localises to the cell inner membrane. The catalysed reaction is di-trans,octa-cis-undecaprenyl diphospho-N-acetyl-alpha-D-muramoyl-L-alanyl-D-glutamyl-meso-2,6-diaminopimeloyl-D-alanyl-D-alanine + UDP-N-acetyl-alpha-D-glucosamine = di-trans,octa-cis-undecaprenyl diphospho-[N-acetyl-alpha-D-glucosaminyl-(1-&gt;4)]-N-acetyl-alpha-D-muramoyl-L-alanyl-D-glutamyl-meso-2,6-diaminopimeloyl-D-alanyl-D-alanine + UDP + H(+). It functions in the pathway cell wall biogenesis; peptidoglycan biosynthesis. In terms of biological role, cell wall formation. Catalyzes the transfer of a GlcNAc subunit on undecaprenyl-pyrophosphoryl-MurNAc-pentapeptide (lipid intermediate I) to form undecaprenyl-pyrophosphoryl-MurNAc-(pentapeptide)GlcNAc (lipid intermediate II). This is UDP-N-acetylglucosamine--N-acetylmuramyl-(pentapeptide) pyrophosphoryl-undecaprenol N-acetylglucosamine transferase from Campylobacter jejuni subsp. doylei (strain ATCC BAA-1458 / RM4099 / 269.97).